Consider the following 292-residue polypeptide: GTP cyclohydrolase FolE2 (292 aa).

This sequence belongs to the GTP cyclohydrolase IV family.

It catalyses the reaction GTP + H2O = 7,8-dihydroneopterin 3'-triphosphate + formate + H(+). It participates in cofactor biosynthesis; 7,8-dihydroneopterin triphosphate biosynthesis; 7,8-dihydroneopterin triphosphate from GTP: step 1/1. Functionally, converts GTP to 7,8-dihydroneopterin triphosphate. The polypeptide is GTP cyclohydrolase FolE2 (Staphylococcus saprophyticus subsp. saprophyticus (strain ATCC 15305 / DSM 20229 / NCIMB 8711 / NCTC 7292 / S-41)).